A 352-amino-acid chain; its full sequence is ER-derived vesicles protein ERV41 (352 aa).

Over 1 to 23 (MAGLKTFDAFPKTEEQYKKKSTK) the chain is Cytoplasmic. Residues 24 to 44 (GGLTSLLTYLFLLFIAWTEFG) form a helical membrane-spanning segment. The Lumenal portion of the chain corresponds to 45–311 (EYFGGYIDQQ…FLVRLVAICS (267 aa)). A helical transmembrane segment spans residues 312–332 (FLVYCASWIFTLLDMALITIM). Topologically, residues 333 to 352 (GPKWSLRYQPDDKTKGILDR) are cytoplasmic. Residues 349-350 (IL) carry the Isoleucine-leucine motif motif.

It belongs to the ERGIC family. In terms of assembly, interacts with ERV46.

The protein resides in the endoplasmic reticulum membrane. Its subcellular location is the golgi apparatus membrane. It is found in the cytoplasmic vesicle. The protein localises to the COPII-coated vesicle membrane. Constituent of COPII-coated endoplasmic reticulum-derived transport vesicles. Required for efficient transport of a subset of secretory proteins to the Golgi. The C-terminal Ile-Leu motif is required for exit from the endoplasmic reticulum. Facilitates retrograde transport from the Golgi to the endoplasmic reticulum. The protein is ER-derived vesicles protein ERV41 (ERV41) of Saccharomyces cerevisiae (strain ATCC 204508 / S288c) (Baker's yeast).